A 71-amino-acid polypeptide reads, in one-letter code: Small ribosomal subunit protein bS21 (71 aa).

This sequence belongs to the bacterial ribosomal protein bS21 family.

In Ruthia magnifica subsp. Calyptogena magnifica, this protein is Small ribosomal subunit protein bS21.